A 426-amino-acid polypeptide reads, in one-letter code: Histidine--tRNA ligase (426 aa).

The protein belongs to the class-II aminoacyl-tRNA synthetase family. As to quaternary structure, homodimer.

The protein resides in the cytoplasm. The catalysed reaction is tRNA(His) + L-histidine + ATP = L-histidyl-tRNA(His) + AMP + diphosphate + H(+). The protein is Histidine--tRNA ligase of Streptococcus pyogenes serotype M18 (strain MGAS8232).